We begin with the raw amino-acid sequence, 425 residues long: Serine--tRNA ligase (425 aa).

230–232 contributes to the L-serine binding site; it reads TGE. ATP is bound at residue 261 to 263; that stretch reads RKE. Glu-284 provides a ligand contact to L-serine. 348–351 is an ATP binding site; sequence EISS. Residue Ser-385 coordinates L-serine.

Belongs to the class-II aminoacyl-tRNA synthetase family. Type-1 seryl-tRNA synthetase subfamily. Homodimer. The tRNA molecule binds across the dimer.

Its subcellular location is the cytoplasm. It catalyses the reaction tRNA(Ser) + L-serine + ATP = L-seryl-tRNA(Ser) + AMP + diphosphate + H(+). The catalysed reaction is tRNA(Sec) + L-serine + ATP = L-seryl-tRNA(Sec) + AMP + diphosphate + H(+). The protein operates within aminoacyl-tRNA biosynthesis; selenocysteinyl-tRNA(Sec) biosynthesis; L-seryl-tRNA(Sec) from L-serine and tRNA(Sec): step 1/1. Functionally, catalyzes the attachment of serine to tRNA(Ser). Is also able to aminoacylate tRNA(Sec) with serine, to form the misacylated tRNA L-seryl-tRNA(Sec), which will be further converted into selenocysteinyl-tRNA(Sec). This chain is Serine--tRNA ligase, found in Wolbachia sp. subsp. Brugia malayi (strain TRS).